Consider the following 204-residue polypeptide: tRNA (pseudouridine(54)-N(1))-methyltransferase (204 aa).

The S-adenosyl-L-methionine site is built by leucine 136 and glycine 158.

Belongs to the methyltransferase superfamily. TrmY family. As to quaternary structure, homodimer.

It localises to the cytoplasm. The enzyme catalyses pseudouridine(54) in tRNA + S-adenosyl-L-methionine = N(1)-methylpseudouridine(54) in tRNA + S-adenosyl-L-homocysteine + H(+). Its function is as follows. Specifically catalyzes the N1-methylation of pseudouridine at position 54 (Psi54) in tRNAs. The chain is tRNA (pseudouridine(54)-N(1))-methyltransferase from Pyrococcus abyssi (strain GE5 / Orsay).